The sequence spans 382 residues: S-adenosylmethionine synthase (382 aa).

Residue H15 coordinates ATP. D17 serves as a coordination point for Mg(2+). E43 is a K(+) binding site. The L-methionine site is built by E56 and Q99. The interval 99-109 (QSGDIAQGVDR) is flexible loop. Residues 164 to 166 (DAK), 230 to 231 (KF), D239, 245 to 246 (RK), A262, and K266 contribute to the ATP site. D239 provides a ligand contact to L-methionine. Residue K270 coordinates L-methionine.

Belongs to the AdoMet synthase family. As to quaternary structure, homotetramer; dimer of dimers. Mg(2+) serves as cofactor. K(+) is required as a cofactor.

The protein localises to the cytoplasm. The catalysed reaction is L-methionine + ATP + H2O = S-adenosyl-L-methionine + phosphate + diphosphate. It participates in amino-acid biosynthesis; S-adenosyl-L-methionine biosynthesis; S-adenosyl-L-methionine from L-methionine: step 1/1. Functionally, catalyzes the formation of S-adenosylmethionine (AdoMet) from methionine and ATP. The overall synthetic reaction is composed of two sequential steps, AdoMet formation and the subsequent tripolyphosphate hydrolysis which occurs prior to release of AdoMet from the enzyme. The polypeptide is S-adenosylmethionine synthase (Dichelobacter nodosus (strain VCS1703A)).